We begin with the raw amino-acid sequence, 160 residues long: Large ribosomal subunit protein eL29 (160 aa).

A compositionally biased stretch (basic residues) spans 1 to 26 (MAKSKNHTTHNQSRKWHRNGIKKPRS). Disordered stretches follow at residues 1 to 34 (MAKS…SLKG) and 115 to 160 (RLCQ…VKAP). At K5 the chain carries N6-methyllysine. S31 is modified (phosphoserine). K33 bears the N6-acetyllysine mark. The span at 126–160 (KAGAKAPAKAQASAPAQAPKGAQAPKGAQAPVKAP) shows a compositional bias: low complexity. 2 tandem repeats follow at residues 127–134 (AGAKAPAK) and 135–142 (AQASAPAQ). The segment at 127 to 142 (AGAKAPAKAQASAPAQ) is 2 X 8 AA tandem repeats of A-X-A-K-A-P-A-[KQ]. S138 is modified (phosphoserine). At K145 the chain carries N6-acetyllysine.

It belongs to the eukaryotic ribosomal protein eL29 family. As to quaternary structure, component of the large ribosomal subunit.

The protein resides in the cytoplasm. Component of the large ribosomal subunit. The ribosome is a large ribonucleoprotein complex responsible for the synthesis of proteins in the cell. The protein is Large ribosomal subunit protein eL29 (Rpl29) of Mus musculus (Mouse).